Here is a 63-residue protein sequence, read N- to C-terminus: UPF0337 protein Atu0782 (63 aa).

The interval 1–63 is disordered; the sequence is MGSTSDKIAG…DAVKGAVDRM (63 aa). Positions 51–63 are enriched in basic and acidic residues; the sequence is KAKDAVKGAVDRM.

The protein belongs to the UPF0337 (CsbD) family.

This chain is UPF0337 protein Atu0782, found in Agrobacterium fabrum (strain C58 / ATCC 33970) (Agrobacterium tumefaciens (strain C58)).